The chain runs to 498 residues: Cytochrome c-552 (498 aa).

The first 31 residues, 1–31, serve as a signal peptide directing secretion; that stretch reads MKNKERKLKSWQGWLIFSSSMVVVFCLGLLA. H119 provides a ligand contact to heme c. Residues C148, C151, and K152 each contribute to the heme site. 6 residues coordinate heme c: C186, C189, H190, C228, C231, and H232. 4 residues coordinate Ca(2+): E234, Y235, K280, and Q282. Y235 lines the substrate pocket. H283 is a substrate binding site. Residues H294, C301, C304, H305, H319, C332, C335, H336, and H411 each contribute to the heme c site.

This sequence belongs to the cytochrome c-552 family. Ca(2+) is required as a cofactor. Requires heme c as cofactor.

It is found in the periplasm. The catalysed reaction is 6 Fe(III)-[cytochrome c] + NH4(+) + 2 H2O = 6 Fe(II)-[cytochrome c] + nitrite + 8 H(+). It participates in nitrogen metabolism; nitrate reduction (assimilation). In terms of biological role, catalyzes the reduction of nitrite to ammonia, consuming six electrons in the process. In Porphyromonas gingivalis (strain ATCC BAA-308 / W83), this protein is Cytochrome c-552.